Consider the following 312-residue polypeptide: Ribosomal RNA small subunit methyltransferase H (312 aa).

S-adenosyl-L-methionine contacts are provided by residues 35–37 (GGH), Asp55, Phe79, Asp101, and Gln108. Residues 286–306 (LKPSEHEVNENSRSRSSVLRV) form a disordered region. Over residues 287-298 (KPSEHEVNENSR) the composition is skewed to basic and acidic residues.

This sequence belongs to the methyltransferase superfamily. RsmH family.

The protein resides in the cytoplasm. The catalysed reaction is cytidine(1402) in 16S rRNA + S-adenosyl-L-methionine = N(4)-methylcytidine(1402) in 16S rRNA + S-adenosyl-L-homocysteine + H(+). In terms of biological role, specifically methylates the N4 position of cytidine in position 1402 (C1402) of 16S rRNA. This chain is Ribosomal RNA small subunit methyltransferase H, found in Aeromonas hydrophila subsp. hydrophila (strain ATCC 7966 / DSM 30187 / BCRC 13018 / CCUG 14551 / JCM 1027 / KCTC 2358 / NCIMB 9240 / NCTC 8049).